The chain runs to 327 residues: Metaxin-1 homolog (327 aa).

A helical membrane pass occupies residues 281 to 301; the sequence is IVAGVGAVLAMGAFAAWRGIY.

The protein belongs to the metaxin family. In terms of assembly, associates with the mitochondrial contact site and cristae organizing system (MICOS) complex (also known as MINOS or MitOS complex).

The protein localises to the mitochondrion outer membrane. In terms of biological role, involved in transport of proteins into the mitochondrion. Essential for embryonic development. The chain is Metaxin-1 homolog from Drosophila melanogaster (Fruit fly).